Here is a 461-residue protein sequence, read N- to C-terminus: D-phenylhydantoinase (461 aa).

Residues H59, H61, and K151 each coordinate a divalent metal cation. N6-carboxylysine is present on K151. Y156 is a substrate binding site. A divalent metal cation-binding residues include H182 and H239. Position 286 (S286) interacts with substrate. Position 313 (D313) interacts with a divalent metal cation. N335 serves as a coordination point for substrate.

Belongs to the metallo-dependent hydrolases superfamily. Hydantoinase/dihydropyrimidinase family. In terms of assembly, homotetramer. The cofactor is a divalent metal cation. Post-translationally, carboxylation allows a single lysine to coordinate two divalent metal cations.

The catalysed reaction is D-5-phenylhydantoin + H2O = N-carbamoyl-D-phenylglycine + H(+). Functionally, catalyzes the stereospecific hydrolysis of the cyclic amide bond of D-hydantoin derivatives with an aromatic side chains at the 5'-position. Has no activity on dihydropyrimidines. The physiological function is unknown. The polypeptide is D-phenylhydantoinase (Shigella boydii serotype 4 (strain Sb227)).